The primary structure comprises 307 residues: Ribosomal RNA small subunit methyltransferase H (307 aa).

Residues Gly33–Tyr35, Asp51, Phe82, Asp96, and Gln103 each bind S-adenosyl-L-methionine.

This sequence belongs to the methyltransferase superfamily. RsmH family.

It is found in the cytoplasm. The enzyme catalyses cytidine(1402) in 16S rRNA + S-adenosyl-L-methionine = N(4)-methylcytidine(1402) in 16S rRNA + S-adenosyl-L-homocysteine + H(+). In terms of biological role, specifically methylates the N4 position of cytidine in position 1402 (C1402) of 16S rRNA. This is Ribosomal RNA small subunit methyltransferase H from Rickettsia africae (strain ESF-5).